Here is a 200-residue protein sequence, read N- to C-terminus: Large ribosomal subunit protein uL4 (200 aa).

The disordered stretch occupies residues 43–71 (RAQKTRAEVSGSGKKPWRQKGTGRARSGD).

It belongs to the universal ribosomal protein uL4 family. Part of the 50S ribosomal subunit.

One of the primary rRNA binding proteins, this protein initially binds near the 5'-end of the 23S rRNA. It is important during the early stages of 50S assembly. It makes multiple contacts with different domains of the 23S rRNA in the assembled 50S subunit and ribosome. Its function is as follows. Forms part of the polypeptide exit tunnel. This chain is Large ribosomal subunit protein uL4, found in Histophilus somni (strain 2336) (Haemophilus somnus).